The sequence spans 196 residues: Large ribosomal subunit protein eL15 (196 aa).

The segment covering 69 to 98 (RKGGSRKQRHKAGRRSKRQGVNRLSRRKSI) has biased composition (basic residues). Disordered stretches follow at residues 69-100 (RKGGSRKQRHKAGRRSKRQGVNRLSRRKSIQR) and 161-196 (FRGLTSAGTKGRGQRTRGTGTEKTRPSVTGNDRQGK). The segment covering 186–196 (PSVTGNDRQGK) has biased composition (polar residues).

Belongs to the eukaryotic ribosomal protein eL15 family.

The chain is Large ribosomal subunit protein eL15 from Halorubrum lacusprofundi (strain ATCC 49239 / DSM 5036 / JCM 8891 / ACAM 34).